Reading from the N-terminus, the 667-residue chain is E3 ubiquitin-protein ligase Midline-1 (667 aa).

An RING-type zinc finger spans residues Cys-10–Arg-60. A phosphoserine mark is found at Ser-92 and Ser-96. 2 B box-type zinc fingers span residues Lys-116 to Ile-165 and Gly-172 to Leu-212. Residues Cys-119, Cys-122, Cys-134, Cys-137, Cys-142, Cys-145, His-150, His-159, Cys-175, His-178, Cys-198, and His-204 each coordinate Zn(2+). The stretch at Arg-205–Glu-264 forms a coiled coil. The COS domain maps to Leu-320–Leu-379. In terms of domain architecture, Fibronectin type-III spans Ala-381–Gln-484. A compositionally biased stretch (polar residues) spans Ser-471–Pro-485. Positions Ser-471–Ser-524 are disordered. Residues Asn-482–His-659 enclose the B30.2/SPRY domain. Positions Val-499–Glu-520 are enriched in basic and acidic residues. Residue Ser-511 is modified to Phosphoserine.

It belongs to the TRIM/RBCC family. Homodimer or heterodimer with MID2. Interacts with IGBP1. Interacts with TRIM16. In terms of processing, phosphorylated on serine and threonine residues. In the fetus, highest expression found in kidney, followed by brain and lung. Expressed at low levels in fetal liver. In the adult, most abundant in heart, placenta and brain.

It is found in the cytoplasm. It localises to the cytoskeleton. Its subcellular location is the spindle. The enzyme catalyses S-ubiquitinyl-[E2 ubiquitin-conjugating enzyme]-L-cysteine + [acceptor protein]-L-lysine = [E2 ubiquitin-conjugating enzyme]-L-cysteine + N(6)-ubiquitinyl-[acceptor protein]-L-lysine.. In terms of biological role, has E3 ubiquitin ligase activity towards IGBP1, promoting its monoubiquitination, which results in deprotection of the catalytic subunit of protein phosphatase PP2A, and its subsequent degradation by polyubiquitination. The protein is E3 ubiquitin-protein ligase Midline-1 (MID1) of Homo sapiens (Human).